A 331-amino-acid chain; its full sequence is Adenosine deaminase (331 aa).

The Zn(2+) site is built by H12 and H14. Positions 14, 16, and 170 each coordinate substrate. H197 serves as a coordination point for Zn(2+). E200 acts as the Proton donor in catalysis. D278 is a Zn(2+) binding site. D279 serves as a coordination point for substrate.

Belongs to the metallo-dependent hydrolases superfamily. Adenosine and AMP deaminases family. Adenosine deaminase subfamily. Zn(2+) is required as a cofactor.

The enzyme catalyses adenosine + H2O + H(+) = inosine + NH4(+). The catalysed reaction is 2'-deoxyadenosine + H2O + H(+) = 2'-deoxyinosine + NH4(+). In terms of biological role, catalyzes the hydrolytic deamination of adenosine and 2-deoxyadenosine. The sequence is that of Adenosine deaminase from Shewanella denitrificans (strain OS217 / ATCC BAA-1090 / DSM 15013).